The primary structure comprises 134 residues: Arginine decarboxylase proenzyme (134 aa).

Ser82 acts as the Schiff-base intermediate with substrate; via pyruvic acid in catalysis. Pyruvic acid (Ser); by autocatalysis is present on Ser82. His87 serves as the catalytic Proton acceptor; for processing activity. Cys102 functions as the Proton donor; for catalytic activity in the catalytic mechanism.

It belongs to the prokaryotic AdoMetDC family. Type 1 subfamily. In terms of assembly, heterooctamer of four alpha and four beta chains arranged as a tetramer of alpha/beta heterodimers. Pyruvate serves as cofactor. In terms of processing, is synthesized initially as an inactive proenzyme. Formation of the active enzyme involves a self-maturation process in which the active site pyruvoyl group is generated from an internal serine residue via an autocatalytic post-translational modification. Two non-identical subunits are generated from the proenzyme in this reaction, and the pyruvate is formed at the N-terminus of the alpha chain, which is derived from the carboxyl end of the proenzyme. The post-translation cleavage follows an unusual pathway, termed non-hydrolytic serinolysis, in which the side chain hydroxyl group of the serine supplies its oxygen atom to form the C-terminus of the beta chain, while the remainder of the serine residue undergoes an oxidative deamination to produce ammonia and the pyruvoyl group blocking the N-terminus of the alpha chain.

The catalysed reaction is L-arginine + H(+) = agmatine + CO2. It participates in amine and polyamine biosynthesis; agmatine biosynthesis; agmatine from L-arginine: step 1/1. In terms of biological role, specifically catalyzes the decarboxylation of L-arginine to agmatine. Has no S-adenosylmethionine decarboxylase (AdoMetDC) activity. The sequence is that of Arginine decarboxylase proenzyme from Saccharolobus islandicus (strain M.16.4 / Kamchatka #3) (Sulfolobus islandicus).